A 201-amino-acid polypeptide reads, in one-letter code: MARYTGPVTRKSRRLRTDLVGGDQAFEKRPYPPGQHGRARIKESEYLLQLQEKQKARFTYGVMEKQFRRYYEEAVRQPGKTGEELLKILESRLDNVIYRAGLARTRRMARQLVSHGHFNVNGVHVNVPSYRVSQYDIVDVRDKSLNTVPFQIARETAGERPIPSWLQVVGERQRVLIHQLPERAQIDVPLTEQLIVEYYSK.

In terms of domain architecture, S4 RNA-binding spans 91–157 (SRLDNVIYRA…VPFQIARETA (67 aa)).

Belongs to the universal ribosomal protein uS4 family. In terms of assembly, part of the 30S ribosomal subunit. Contacts protein S5. The interaction surface between S4 and S5 is involved in control of translational fidelity.

One of the primary rRNA binding proteins, it binds directly to 16S rRNA where it nucleates assembly of the body of the 30S subunit. In terms of biological role, with S5 and S12 plays an important role in translational accuracy. The chain is Small ribosomal subunit protein uS4 from Mycobacterium tuberculosis (strain ATCC 25177 / H37Ra).